The sequence spans 75 residues: Large ribosomal subunit protein bL31c (75 aa).

Belongs to the bacterial ribosomal protein bL31 family. Type A subfamily. As to quaternary structure, part of the 50S ribosomal subunit.

The protein resides in the plastid. It localises to the chloroplast. Functionally, binds the 23S rRNA. This is Large ribosomal subunit protein bL31c from Cyanidium caldarium (Red alga).